Reading from the N-terminus, the 98-residue chain is Biogenesis of lysosome-related organelles complex 1 subunit SNN1 (98 aa).

Residues M55–L98 adopt a coiled-coil conformation.

This sequence belongs to the SNAPIN family. As to quaternary structure, component of the biogenesis of lysosome-related organelles complex-1 (BLOC-1).

It localises to the endosome. Its function is as follows. Component of the biogenesis of lysosome-related organelles complex-1 (BLOC-1), a complex involved in endosomal cargo sorting. The chain is Biogenesis of lysosome-related organelles complex 1 subunit SNN1 (SNN1) from Eremothecium gossypii (strain ATCC 10895 / CBS 109.51 / FGSC 9923 / NRRL Y-1056) (Yeast).